Reading from the N-terminus, the 156-residue chain is Protein CURVATURE THYLAKOID 1C, chloroplastic (156 aa).

Residues 1–55 (MASISATLPSPLLLTQRKSNLTSIQKLPFSLTRGTNDLSPLSLTRNPSSISLMVK) constitute a chloroplast transit peptide. Topologically, residues 56–83 (ASGESSDSSTDLDVVSTIQNVWDKSEDR) are stromal. Residues 84–104 (LGLIGLGFAGIVALWASLNLI) form a helical membrane-spanning segment. Over 105–109 (TAIDK) the chain is Lumenal. The helical transmembrane segment at 110 to 130 (LPVISSGFELVGILFSTWFTY) threads the bilayer. Over 131 to 156 (RYLLFKPDRQELSKIVKKSVADILGQ) the chain is Stromal.

The protein belongs to the CURT family. As to quaternary structure, homo- and heterodimers and trimers. Interacts with PSAD2.

Its subcellular location is the plastid. The protein resides in the chloroplast thylakoid membrane. Determines thylakoid architecture by inducing membrane curvature. The chain is Protein CURVATURE THYLAKOID 1C, chloroplastic (CURT1C) from Arabidopsis thaliana (Mouse-ear cress).